We begin with the raw amino-acid sequence, 259 residues long: Triosephosphate isomerase (259 aa).

A substrate-binding site is contributed by 10–12 (NWK). The active-site Electrophile is the histidine 100. The Proton acceptor role is filled by glutamate 172. Substrate-binding positions include glycine 178, serine 218, and 239 to 240 (GG).

The protein belongs to the triosephosphate isomerase family. As to quaternary structure, homodimer.

Its subcellular location is the cytoplasm. It catalyses the reaction D-glyceraldehyde 3-phosphate = dihydroxyacetone phosphate. It participates in carbohydrate biosynthesis; gluconeogenesis. The protein operates within carbohydrate degradation; glycolysis; D-glyceraldehyde 3-phosphate from glycerone phosphate: step 1/1. Involved in the gluconeogenesis. Catalyzes stereospecifically the conversion of dihydroxyacetone phosphate (DHAP) to D-glyceraldehyde-3-phosphate (G3P). This chain is Triosephosphate isomerase, found in Corynebacterium glutamicum (strain ATCC 13032 / DSM 20300 / JCM 1318 / BCRC 11384 / CCUG 27702 / LMG 3730 / NBRC 12168 / NCIMB 10025 / NRRL B-2784 / 534).